The primary structure comprises 426 residues: tRNA modification GTPase MnmE (426 aa).

Positions 20, 77, and 117 each coordinate (6S)-5-formyl-5,6,7,8-tetrahydrofolate. The 138-residue stretch at Gly213–Ser350 folds into the TrmE-type G domain. Asn223 provides a ligand contact to K(+). Residues Asn223 to Thr228, Ser242 to Thr248, and Asp267 to Gly270 contribute to the GTP site. Ser227 serves as a coordination point for Mg(2+). Residues Ser242, Val244, and Thr247 each coordinate K(+). Residue Thr248 coordinates Mg(2+). Lys426 contributes to the (6S)-5-formyl-5,6,7,8-tetrahydrofolate binding site.

It belongs to the TRAFAC class TrmE-Era-EngA-EngB-Septin-like GTPase superfamily. TrmE GTPase family. Homodimer. Heterotetramer of two MnmE and two MnmG subunits. K(+) is required as a cofactor.

It is found in the cytoplasm. Functionally, exhibits a very high intrinsic GTPase hydrolysis rate. Involved in the addition of a carboxymethylaminomethyl (cmnm) group at the wobble position (U34) of certain tRNAs, forming tRNA-cmnm(5)s(2)U34. The chain is tRNA modification GTPase MnmE from Jannaschia sp. (strain CCS1).